A 681-amino-acid polypeptide reads, in one-letter code: Elongation factor G (681 aa).

Residues 5–279 (KNIRNIGIIA…SIVNFLPSPI (275 aa)) enclose the tr-type G domain. GTP-binding positions include 14-21 (AHVDAGKT), 82-86 (DTPGH), and 136-139 (NKLD).

This sequence belongs to the TRAFAC class translation factor GTPase superfamily. Classic translation factor GTPase family. EF-G/EF-2 subfamily.

The protein localises to the cytoplasm. Functionally, catalyzes the GTP-dependent ribosomal translocation step during translation elongation. During this step, the ribosome changes from the pre-translocational (PRE) to the post-translocational (POST) state as the newly formed A-site-bound peptidyl-tRNA and P-site-bound deacylated tRNA move to the P and E sites, respectively. Catalyzes the coordinated movement of the two tRNA molecules, the mRNA and conformational changes in the ribosome. The protein is Elongation factor G of Carsonella ruddii (strain PV).